Reading from the N-terminus, the 762-residue chain is uncharacterized protein (762 aa).

One can recognise an MCM domain in the interval 334 to 542 (IIDILSNYLI…SDEEIAEHIL (209 aa)). 384–391 (TDPGIGKS) lines the ATP pocket.

The protein belongs to the MCM family.

This is an uncharacterized protein from Methanocaldococcus jannaschii (strain ATCC 43067 / DSM 2661 / JAL-1 / JCM 10045 / NBRC 100440) (Methanococcus jannaschii).